The primary structure comprises 336 residues: dTDP-glucose 4,6-dehydratase (336 aa).

NAD(+)-binding positions include 7–13 (GGAGFIG), 37–40 (DKLT), and 63–64 (DI). Residue threonine 87 participates in substrate binding. Threonine 102 contributes to the NAD(+) binding site. 127–129 (TDE) lines the substrate pocket. The active-site Proton donor is the aspartate 128. Catalysis depends on proton acceptor residues glutamate 129 and tyrosine 151. 151 to 155 (YAAAK) serves as a coordination point for NAD(+). Substrate is bound at residue asparagine 180. Asparagine 181 serves as a coordination point for NAD(+). Substrate contacts are provided by residues 190–191 (KL), 206–208 (PVY), arginine 215, asparagine 250, and 274–277 (RPGH).

It belongs to the NAD(P)-dependent epimerase/dehydratase family. dTDP-glucose dehydratase subfamily. Homodimer. NAD(+) serves as cofactor.

It catalyses the reaction dTDP-alpha-D-glucose = dTDP-4-dehydro-6-deoxy-alpha-D-glucose + H2O. It participates in antibiotic biosynthesis; novobiocin biosynthesis. Its function is as follows. dTDP-glucose 4,6-dehydratase involved in the generation of the deoxysugar in the novobiocin biosynthesis pathway, an aminocoumarin family antibiotic that targets bacterial DNA gyrases. This Streptomyces niveus (Streptomyces spheroides) protein is dTDP-glucose 4,6-dehydratase (novT).